Consider the following 185-residue polypeptide: Elongation factor P 1 (185 aa).

This sequence belongs to the elongation factor P family.

It localises to the cytoplasm. It functions in the pathway protein biosynthesis; polypeptide chain elongation. Functionally, involved in peptide bond synthesis. Stimulates efficient translation and peptide-bond synthesis on native or reconstituted 70S ribosomes in vitro. Probably functions indirectly by altering the affinity of the ribosome for aminoacyl-tRNA, thus increasing their reactivity as acceptors for peptidyl transferase. The chain is Elongation factor P 1 (efp1) from Chlamydia caviae (strain ATCC VR-813 / DSM 19441 / 03DC25 / GPIC) (Chlamydophila caviae).